Here is a 147-residue protein sequence, read N- to C-terminus: Nucleoside diphosphate kinase (147 aa).

Positions 9, 57, 85, 91, 102, and 112 each coordinate ATP. Histidine 115 (pros-phosphohistidine intermediate) is an active-site residue.

It belongs to the NDK family. Mg(2+) is required as a cofactor.

Its subcellular location is the cytoplasm. It catalyses the reaction a 2'-deoxyribonucleoside 5'-diphosphate + ATP = a 2'-deoxyribonucleoside 5'-triphosphate + ADP. The catalysed reaction is a ribonucleoside 5'-diphosphate + ATP = a ribonucleoside 5'-triphosphate + ADP. Functionally, major role in the synthesis of nucleoside triphosphates other than ATP. The ATP gamma phosphate is transferred to the NDP beta phosphate via a ping-pong mechanism, using a phosphorylated active-site intermediate. This is Nucleoside diphosphate kinase from Thermoplasma volcanium (strain ATCC 51530 / DSM 4299 / JCM 9571 / NBRC 15438 / GSS1).